Here is a 183-residue protein sequence, read N- to C-terminus: Inosine triphosphate pyrophosphatase (183 aa).

8 to 13 contributes to the ITP binding site; the sequence is TGNKNK. Glu36 is a binding site for Mg(2+). Residues Lys48, 64 to 65, Lys81, 140 to 143, Lys161, and 166 to 167 each bind ITP; these read DT, FGWD, and HR.

The protein belongs to the HAM1 NTPase family. As to quaternary structure, homodimer. The cofactor is Mg(2+). Requires Mn(2+) as cofactor.

Its subcellular location is the cytoplasm. It localises to the nucleus. The catalysed reaction is ITP + H2O = IMP + diphosphate + H(+). It carries out the reaction dITP + H2O = dIMP + diphosphate + H(+). The enzyme catalyses XTP + H2O = XMP + diphosphate + H(+). Pyrophosphatase that hydrolyzes non-canonical purine nucleotides such as inosine triphosphate (ITP), deoxyinosine triphosphate (dITP) or xanthosine 5'-triphosphate (XTP) to their respective monophosphate derivatives. The enzyme does not distinguish between the deoxy- and ribose forms. Probably excludes non-canonical purines from RNA and DNA precursor pools, thus preventing their incorporation into RNA and DNA and avoiding chromosomal lesions. The polypeptide is Inosine triphosphate pyrophosphatase (Ajellomyces capsulatus (strain G186AR / H82 / ATCC MYA-2454 / RMSCC 2432) (Darling's disease fungus)).